The sequence spans 739 residues: Trehalose phosphorylase (739 aa).

Residues 1–26 (MSTPHHQFESKSSTAIRRRLSSSVSS) constitute a propeptide that is removed on maturation. A disordered region spans residues 1 to 28 (MSTPHHQFESKSSTAIRRRLSSSVSSKQ).

It belongs to the glycosyltransferase group 1 family. Glycosyltransferase 4 subfamily. As to quaternary structure, homodimer.

The enzyme catalyses alpha,alpha-trehalose + phosphate = alpha-D-glucose + alpha-D-glucose 1-phosphate. Reversibly catalyzes the synthesis and degradation of trehalose from glucose and alpha-D-glucose 1-phosphate. The equilibrium lies in the direction of trehalose synthesis. In Pleurotus pulmonarius (Indian oyster mushroom), this protein is Trehalose phosphorylase.